Here is a 216-residue protein sequence, read N- to C-terminus: Guanylate kinase (216 aa).

The Guanylate kinase-like domain maps to 15–193 (GNLFMVVAPS…ALEELRNVVR (179 aa)). 22–29 (APSGAGKS) serves as a coordination point for ATP.

Belongs to the guanylate kinase family.

The protein resides in the cytoplasm. The enzyme catalyses GMP + ATP = GDP + ADP. In terms of biological role, essential for recycling GMP and indirectly, cGMP. This Cupriavidus pinatubonensis (strain JMP 134 / LMG 1197) (Cupriavidus necator (strain JMP 134)) protein is Guanylate kinase.